Here is an 85-residue protein sequence, read N- to C-terminus: Cell division topological specificity factor (85 aa).

Belongs to the MinE family.

In terms of biological role, prevents the cell division inhibition by proteins MinC and MinD at internal division sites while permitting inhibition at polar sites. This ensures cell division at the proper site by restricting the formation of a division septum at the midpoint of the long axis of the cell. The polypeptide is Cell division topological specificity factor (Dechloromonas aromatica (strain RCB)).